The chain runs to 485 residues: Envelope glycoprotein C (485 aa).

The first 32 residues, 1–32 (MGLVNIMRFITFAYIICGGFILTRTSGTSASA), serve as a signal peptide directing secretion. Residues 28–72 (TSASASPATPTTNTGEGTSSPVTPTYTTSTDSNNSTATNNSTDVN) show a composition bias toward low complexity. Residues 28-88 (TSASASPATP…TPSHPHSHEN (61 aa)) are disordered. Residues 33-444 (SPATPTTNTG…DASPIVEDMP (412 aa)) lie on the Virion surface side of the membrane. Residues Asn60, Asn61, Asn66, Asn67, Asn72, Asn108, Asn116, Asn147, Asn220, Asn225, and Asn286 are each glycosylated (N-linked (GlcNAc...) asparagine; by host). Residues Cys92 and Cys109 are joined by a disulfide bond. One can recognise an Ig-like domain in the interval 237–330 (PLMDLSVHPS…EWYRDEVSFS (94 aa)). 3 disulfides stabilise this stretch: Cys256–Cys318, Cys357–Cys416, and Cys361–Cys390. The chain crosses the membrane as a helical span at residues 445-468 (VLTGIIAVTCGAAALALVVLITAV). At 469–485 (CFYCSKPSQVPYKKADF) the chain is on the cytoplasmic side.

The protein belongs to the herpesviridae glycoprotein C family. Interacts with host complement component C3; this interaction inhibits host immune response by disregulating complement cascade.

Its subcellular location is the virion membrane. Its function is as follows. Essential for the initial attachment to heparan sulfate moieties of the host cell surface proteoglycans. Also plays a role in host immune evasion by inhibiting the host complement cascade activation. This is Envelope glycoprotein C (gC) from Equine herpesvirus 4 (strain 1942) (EHV-4).